Reading from the N-terminus, the 402-residue chain is uncharacterized protein (402 aa).

The Cytoplasmic segment spans residues 1–11 (MTPSNYQRTRW). A helical transmembrane segment spans residues 12 to 34 (LTLIGTIITQFALGSVYTWSLFN). Residues 35–43 (GALSAKLDA) lie on the Periplasmic side of the membrane. A helical membrane pass occupies residues 44–66 (PVSQVAFSFGLLSLGLAISSSVA). At 67–72 (GKLQER) the chain is on the cytoplasmic side. A helical transmembrane segment spans residues 73 to 95 (FGVKRVTMASGILLGLGFFLTAH). Over 96–99 (SDNL) the chain is Periplasmic. A helical transmembrane segment spans residues 100 to 122 (MMLWLSAGVLVGLADGAGYLLTL). Topologically, residues 123–134 (SNCVKWFPERKG) are cytoplasmic. A helical transmembrane segment spans residues 135–154 (LISAFAIGSYGLGSLGFKFI). At 155 to 168 (DTQLLETVGLEKTF) the chain is on the periplasmic side. A helical transmembrane segment spans residues 169–186 (VIWGAIALLMIVFGATLM). Residues 187–216 (KDAPKQEVKTSNGVVEKDYTLAESMRKPQY) are Cytoplasmic-facing. Residues 217 to 236 (WMLAVMFLTACMSGLYVIGV) traverse the membrane as a helical segment. At 237–250 (AKDIAQSLAHLDVV) the chain is on the periplasmic side. Residues 251–273 (SAANAVTVISIANLSGRLVLGIL) form a helical membrane-spanning segment. The Cytoplasmic segment spans residues 274–279 (SDKIAR). Residues 280-302 (IRVITIGQVISLVGMAALLFAPL) form a helical membrane-spanning segment. Residues 303-306 (NAVT) lie on the Periplasmic side of the membrane. A helical transmembrane segment spans residues 307-329 (FFAAIACVAFNFGGTITVFPSLV). The Cytoplasmic portion of the chain corresponds to 330–341 (SEFFGLNNLAKN). Residues 342–364 (YGVIYLGFGIGSICGSIIASLFG) form a helical membrane-spanning segment. Over 365–367 (GFY) the chain is Periplasmic. Residues 368 to 387 (VTFYVIFALLILSLALSTTI) form a helical membrane-spanning segment. Residues 388–402 (RQPEQKMLREAHGSL) lie on the Cytoplasmic side of the membrane.

This sequence belongs to the major facilitator superfamily. Interacts with BtsS and YpdA.

It localises to the cell inner membrane. Its function is as follows. Part of a nutrient-sensing regulatory network composed of the two-component regulatory systems BtsS/BtsR and YpdA/YpdB, and their respective target proteins, BtsT and YhjX. This is an uncharacterized protein from Escherichia coli (strain K12).